The primary structure comprises 331 residues: 6-phosphogluconolactonase (331 aa).

The protein belongs to the cycloisomerase 2 family.

It carries out the reaction 6-phospho-D-glucono-1,5-lactone + H2O = 6-phospho-D-gluconate + H(+). The protein operates within carbohydrate degradation; pentose phosphate pathway; D-ribulose 5-phosphate from D-glucose 6-phosphate (oxidative stage): step 2/3. In terms of biological role, catalyzes the hydrolysis of 6-phosphogluconolactone to 6-phosphogluconate. The sequence is that of 6-phosphogluconolactonase from Citrobacter koseri (strain ATCC BAA-895 / CDC 4225-83 / SGSC4696).